The primary structure comprises 304 residues: DCN1-like protein 3 (304 aa).

Disordered regions lie at residues 1 to 86 (MGQC…AEES) and 284 to 304 (EGEG…EEQT). The N-myristoyl glycine moiety is linked to residue G2. The DCUN1 domain maps to 86 to 278 (SSLQRLEELF…LFDTFVEWEM (193 aa)).

Part of a complex containing DCUN1D3, CUL3 and RBX1. Interacts (via the DCUN1 domain) with the unneddylated cullins: interacts with CUL1, CUL2, CUL3, CUL4A, CUL4B and CUL5; these interactions promote the cullin neddylation and the identity of the cullin dictates the affinity of the interaction. Interacts preferentially with CUL3; this interaction triggers the relocalization of CUL3 to the cell membrane where CUL3 is neddylated. Interacts (via DCUN1 domain) with RBX1. May also interact with regulators or subunits of cullin-RING ligases such as RNF7, ELOB and DDB1; these interactions are bridged by cullins. Interacts (via DCUN1 domain) with CAND1; this interaction is bridged by cullins and strongly inhibits cullin neddylation. These CAND-cullin-DCNL complexes can only be neddylated in the presence of a substrate adapter. Interacts (via DCUN1 domain) with the N-terminally acetylated form of UBE2M and UBE2F. In terms of tissue distribution, tends to be down-regulated in different type of cancers, including lung neuroendocrine carcinoma, thyroid Huerthle cell carcinoma and lung squamous cell carcinoma. Mostly expressed in testis and brain. Highly expressed in liver, bladder and renal normal tissue than their tumor tissue counterparts. Palmitoylation stabilizes DCUN1D3 at the cell membrane.

Its subcellular location is the cell membrane. It localises to the cytoplasm. It is found in the nucleus. The protein localises to the perinuclear region. Contributes to the neddylation of all cullins by transferring NEDD8 from N-terminally acetylated NEDD8-conjugating E2s enzyme to different cullin C-terminal domain-RBX complexes and may play a role in the cell cycle progression by regulating the SCF ubiquitin E3 ligase complex, after UV damage. At the cell membrane, can promote and as well inhibit cullins neddylation. This chain is DCN1-like protein 3, found in Homo sapiens (Human).